The following is a 180-amino-acid chain: Adenine phosphoribosyltransferase (180 aa).

It belongs to the purine/pyrimidine phosphoribosyltransferase family. In terms of assembly, homodimer.

It is found in the cytoplasm. The catalysed reaction is AMP + diphosphate = 5-phospho-alpha-D-ribose 1-diphosphate + adenine. It participates in purine metabolism; AMP biosynthesis via salvage pathway; AMP from adenine: step 1/1. Catalyzes a salvage reaction resulting in the formation of AMP, that is energically less costly than de novo synthesis. In Rhizobium johnstonii (strain DSM 114642 / LMG 32736 / 3841) (Rhizobium leguminosarum bv. viciae), this protein is Adenine phosphoribosyltransferase.